The primary structure comprises 512 residues: Putative ribose/galactose/methyl galactoside import ATP-binding protein 2 (512 aa).

ABC transporter domains lie at 14 to 251 (IALT…VGRQ) and 262 to 507 (TSGN…TQRE). 46-53 (GENGAGKS) provides a ligand contact to ATP.

It belongs to the ABC transporter superfamily. Carbohydrate importer 2 (CUT2) (TC 3.A.1.2) family.

It localises to the cell inner membrane. It catalyses the reaction D-ribose(out) + ATP + H2O = D-ribose(in) + ADP + phosphate + H(+). The catalysed reaction is D-galactose(out) + ATP + H2O = D-galactose(in) + ADP + phosphate + H(+). Its function is as follows. Part of an ABC transporter complex involved in carbohydrate import. Could be involved in ribose, galactose and/or methyl galactoside import. Responsible for energy coupling to the transport system. The chain is Putative ribose/galactose/methyl galactoside import ATP-binding protein 2 from Burkholderia cenocepacia (strain HI2424).